The following is a 1162-amino-acid chain: Carbamoyl phosphate synthase large chain (1162 aa).

The tract at residues 1–456 (MPKRTDIKSI…SLQKALRGLE (456 aa)) is carboxyphosphate synthetic domain. ATP contacts are provided by R129, R222, G228, G229, E261, V263, E268, G294, V295, H296, Q338, and E352. Residues 186–381 (ETEWQLGEVE…IAKVAAKLAV (196 aa)) enclose the ATP-grasp 1 domain. 3 residues coordinate Mg(2+): Q338, E352, and N354. Q338, E352, and N354 together coordinate Mn(2+). The oligomerization domain stretch occupies residues 457 to 613 (TGLTGFDEIA…PFVGQPRSEA (157 aa)). Positions 614–1025 (EVSDRKKVVI…AFAKAQLGAG (412 aa)) are carbamoyl phosphate synthetic domain. Residues 742-954 (QKLLIKLDLN…IAKVAARIMA (213 aa)) enclose the ATP-grasp 2 domain. 10 residues coordinate ATP: R778, T838, L840, E845, G870, I871, H872, S873, Q913, and E925. Positions 913, 925, and 927 each coordinate Mg(2+). Mn(2+) contacts are provided by Q913, E925, and N927. Residues 1026-1162 (VELPREGTVF…VRPLQDYFRS (137 aa)) form the MGS-like domain. Positions 1026–1162 (VELPREGTVF…VRPLQDYFRS (137 aa)) are allosteric domain.

This sequence belongs to the CarB family. In terms of assembly, composed of two chains; the small (or glutamine) chain promotes the hydrolysis of glutamine to ammonia, which is used by the large (or ammonia) chain to synthesize carbamoyl phosphate. Tetramer of heterodimers (alpha,beta)4. Mg(2+) is required as a cofactor. It depends on Mn(2+) as a cofactor.

It carries out the reaction hydrogencarbonate + L-glutamine + 2 ATP + H2O = carbamoyl phosphate + L-glutamate + 2 ADP + phosphate + 2 H(+). The enzyme catalyses hydrogencarbonate + NH4(+) + 2 ATP = carbamoyl phosphate + 2 ADP + phosphate + 2 H(+). Its pathway is amino-acid biosynthesis; L-arginine biosynthesis; carbamoyl phosphate from bicarbonate: step 1/1. The protein operates within pyrimidine metabolism; UMP biosynthesis via de novo pathway; (S)-dihydroorotate from bicarbonate: step 1/3. In terms of biological role, large subunit of the glutamine-dependent carbamoyl phosphate synthetase (CPSase). CPSase catalyzes the formation of carbamoyl phosphate from the ammonia moiety of glutamine, carbonate, and phosphate donated by ATP, constituting the first step of 2 biosynthetic pathways, one leading to arginine and/or urea and the other to pyrimidine nucleotides. The large subunit (synthetase) binds the substrates ammonia (free or transferred from glutamine from the small subunit), hydrogencarbonate and ATP and carries out an ATP-coupled ligase reaction, activating hydrogencarbonate by forming carboxy phosphate which reacts with ammonia to form carbamoyl phosphate. This chain is Carbamoyl phosphate synthase large chain, found in Brucella suis biovar 1 (strain 1330).